Reading from the N-terminus, the 184-residue chain is ATP synthase subunit b, chloroplastic (184 aa).

The chain crosses the membrane as a helical span at residues 31–53 (LINLGIVISLLIYFGKGVLSNLL).

It belongs to the ATPase B chain family. F-type ATPases have 2 components, F(1) - the catalytic core - and F(0) - the membrane proton channel. F(1) has five subunits: alpha(3), beta(3), gamma(1), delta(1), epsilon(1). F(0) has four main subunits: a(1), b(1), b'(1) and c(10-14). The alpha and beta chains form an alternating ring which encloses part of the gamma chain. F(1) is attached to F(0) by a central stalk formed by the gamma and epsilon chains, while a peripheral stalk is formed by the delta, b and b' chains.

It is found in the plastid. It localises to the chloroplast thylakoid membrane. F(1)F(0) ATP synthase produces ATP from ADP in the presence of a proton or sodium gradient. F-type ATPases consist of two structural domains, F(1) containing the extramembraneous catalytic core and F(0) containing the membrane proton channel, linked together by a central stalk and a peripheral stalk. During catalysis, ATP synthesis in the catalytic domain of F(1) is coupled via a rotary mechanism of the central stalk subunits to proton translocation. In terms of biological role, component of the F(0) channel, it forms part of the peripheral stalk, linking F(1) to F(0). The chain is ATP synthase subunit b, chloroplastic from Aneura mirabilis (Parasitic liverwort).